The following is a 168-amino-acid chain: G/U mismatch-specific DNA glycosylase (168 aa).

The protein belongs to the uracil-DNA glycosylase (UDG) superfamily. TDG/mug family. In terms of assembly, binds DNA as a monomer.

It is found in the cytoplasm. The enzyme catalyses Specifically hydrolyzes mismatched double-stranded DNA and polynucleotides, releasing free uracil.. In terms of biological role, excises ethenocytosine and uracil, which can arise by alkylation or deamination of cytosine, respectively, from the corresponding mispairs with guanine in ds-DNA. It is capable of hydrolyzing the carbon-nitrogen bond between the sugar-phosphate backbone of the DNA and the mispaired base. The complementary strand guanine functions in substrate recognition. Required for DNA damage lesion repair in stationary-phase cells. The sequence is that of G/U mismatch-specific DNA glycosylase from Salmonella dublin (strain CT_02021853).